The chain runs to 758 residues: 5-methyltetrahydropteroyltriglutamate--homocysteine methyltransferase (758 aa).

5-methyltetrahydropteroyltri-L-glutamate-binding positions include 17–20 and Lys114; that span reads RELK. Residues 429-431 and Glu482 contribute to the L-homocysteine site; that span reads IGS. L-methionine contacts are provided by residues 429–431 and Glu482; that span reads IGS. 5-methyltetrahydropteroyltri-L-glutamate contacts are provided by residues 513–514 and Trp559; that span reads RC. Position 597 (Asp597) interacts with L-homocysteine. Asp597 contributes to the L-methionine binding site. Position 603 (Glu603) interacts with 5-methyltetrahydropteroyltri-L-glutamate. Zn(2+) contacts are provided by His639, Cys641, and Glu663. His692 serves as the catalytic Proton donor. Residue Cys724 coordinates Zn(2+).

Belongs to the vitamin-B12 independent methionine synthase family. Zn(2+) serves as cofactor.

It catalyses the reaction 5-methyltetrahydropteroyltri-L-glutamate + L-homocysteine = tetrahydropteroyltri-L-glutamate + L-methionine. The protein operates within amino-acid biosynthesis; L-methionine biosynthesis via de novo pathway; L-methionine from L-homocysteine (MetE route): step 1/1. Its function is as follows. Catalyzes the transfer of a methyl group from 5-methyltetrahydrofolate to homocysteine resulting in methionine formation. This Buchnera aphidicola subsp. Acyrthosiphon pisum (strain APS) (Acyrthosiphon pisum symbiotic bacterium) protein is 5-methyltetrahydropteroyltriglutamate--homocysteine methyltransferase.